Consider the following 245-residue polypeptide: 1-(5-phosphoribosyl)-5-[(5-phosphoribosylamino)methylideneamino] imidazole-4-carboxamide isomerase (245 aa).

Residue D7 is the Proton acceptor of the active site. Catalysis depends on D129, which acts as the Proton donor.

The protein belongs to the HisA/HisF family.

The protein localises to the cytoplasm. The catalysed reaction is 1-(5-phospho-beta-D-ribosyl)-5-[(5-phospho-beta-D-ribosylamino)methylideneamino]imidazole-4-carboxamide = 5-[(5-phospho-1-deoxy-D-ribulos-1-ylimino)methylamino]-1-(5-phospho-beta-D-ribosyl)imidazole-4-carboxamide. It participates in amino-acid biosynthesis; L-histidine biosynthesis; L-histidine from 5-phospho-alpha-D-ribose 1-diphosphate: step 4/9. The sequence is that of 1-(5-phosphoribosyl)-5-[(5-phosphoribosylamino)methylideneamino] imidazole-4-carboxamide isomerase from Salmonella dublin (strain CT_02021853).